Here is a 148-residue protein sequence, read N- to C-terminus: Deoxyuridine 5'-triphosphate nucleotidohydrolase (148 aa).

Residues R68–G70, N81, T85–D87, and K95 contribute to the substrate site.

The protein belongs to the dUTPase family. The cofactor is Mg(2+).

The catalysed reaction is dUTP + H2O = dUMP + diphosphate + H(+). It functions in the pathway pyrimidine metabolism; dUMP biosynthesis; dUMP from dCTP (dUTP route): step 2/2. In terms of biological role, this enzyme is involved in nucleotide metabolism: it produces dUMP, the immediate precursor of thymidine nucleotides and it decreases the intracellular concentration of dUTP so that uracil cannot be incorporated into DNA. The polypeptide is Deoxyuridine 5'-triphosphate nucleotidohydrolase (Rickettsia conorii (strain ATCC VR-613 / Malish 7)).